Consider the following 151-residue polypeptide: 6,7-dimethyl-8-ribityllumazine synthase (151 aa).

Residues Phe-23, 55–57 (AYE), and 79–81 (AVI) each bind 5-amino-6-(D-ribitylamino)uracil. 84–85 (AT) provides a ligand contact to (2S)-2-hydroxy-3-oxobutyl phosphate. His-87 functions as the Proton donor in the catalytic mechanism. Phe-111 is a 5-amino-6-(D-ribitylamino)uracil binding site. Arg-125 serves as a coordination point for (2S)-2-hydroxy-3-oxobutyl phosphate.

This sequence belongs to the DMRL synthase family.

The enzyme catalyses (2S)-2-hydroxy-3-oxobutyl phosphate + 5-amino-6-(D-ribitylamino)uracil = 6,7-dimethyl-8-(1-D-ribityl)lumazine + phosphate + 2 H2O + H(+). It functions in the pathway cofactor biosynthesis; riboflavin biosynthesis; riboflavin from 2-hydroxy-3-oxobutyl phosphate and 5-amino-6-(D-ribitylamino)uracil: step 1/2. In terms of biological role, catalyzes the formation of 6,7-dimethyl-8-ribityllumazine by condensation of 5-amino-6-(D-ribitylamino)uracil with 3,4-dihydroxy-2-butanone 4-phosphate. This is the penultimate step in the biosynthesis of riboflavin. The protein is 6,7-dimethyl-8-ribityllumazine synthase of Leptospira interrogans serogroup Icterohaemorrhagiae serovar copenhageni (strain Fiocruz L1-130).